A 374-amino-acid chain; its full sequence is Probable dual-specificity RNA methyltransferase RlmN (374 aa).

Glutamate 108 serves as the catalytic Proton acceptor. Positions 114 to 361 (YSDRNTVCIS…SCTVRDTRGR (248 aa)) constitute a Radical SAM core domain. Cysteines 121 and 367 form a disulfide. Cysteine 128, cysteine 132, and cysteine 135 together coordinate [4Fe-4S] cluster. S-adenosyl-L-methionine-binding positions include 188–189 (GE), serine 222, 245–247 (SLH), and asparagine 324. The active-site S-methylcysteine intermediate is the cysteine 367.

The protein belongs to the radical SAM superfamily. RlmN family. The cofactor is [4Fe-4S] cluster.

Its subcellular location is the cytoplasm. The catalysed reaction is adenosine(2503) in 23S rRNA + 2 reduced [2Fe-2S]-[ferredoxin] + 2 S-adenosyl-L-methionine = 2-methyladenosine(2503) in 23S rRNA + 5'-deoxyadenosine + L-methionine + 2 oxidized [2Fe-2S]-[ferredoxin] + S-adenosyl-L-homocysteine. It catalyses the reaction adenosine(37) in tRNA + 2 reduced [2Fe-2S]-[ferredoxin] + 2 S-adenosyl-L-methionine = 2-methyladenosine(37) in tRNA + 5'-deoxyadenosine + L-methionine + 2 oxidized [2Fe-2S]-[ferredoxin] + S-adenosyl-L-homocysteine. Specifically methylates position 2 of adenine 2503 in 23S rRNA and position 2 of adenine 37 in tRNAs. The polypeptide is Probable dual-specificity RNA methyltransferase RlmN (Mycobacterium sp. (strain JLS)).